The chain runs to 647 residues: Threonine--tRNA ligase (647 aa).

Residues M1–T61 enclose the TGS domain. The tract at residues D242 to P540 is catalytic. C336, H387, and H517 together coordinate Zn(2+).

This sequence belongs to the class-II aminoacyl-tRNA synthetase family. In terms of assembly, homodimer. It depends on Zn(2+) as a cofactor.

It is found in the cytoplasm. It catalyses the reaction tRNA(Thr) + L-threonine + ATP = L-threonyl-tRNA(Thr) + AMP + diphosphate + H(+). Functionally, catalyzes the attachment of threonine to tRNA(Thr) in a two-step reaction: L-threonine is first activated by ATP to form Thr-AMP and then transferred to the acceptor end of tRNA(Thr). Also edits incorrectly charged L-seryl-tRNA(Thr). The sequence is that of Threonine--tRNA ligase from Streptococcus pneumoniae serotype 4 (strain ATCC BAA-334 / TIGR4).